The primary structure comprises 481 residues: Ribulose bisphosphate carboxylase large chain (481 aa).

A propeptide spanning residues 1–2 (MS) is cleaved from the precursor. Residue Pro3 is modified to N-acetylproline. Lys14 bears the N6,N6,N6-trimethyllysine mark. Substrate contacts are provided by Asn123 and Thr173. Lys175 functions as the Proton acceptor in the catalytic mechanism. Lys177 is a binding site for substrate. Residues Lys201, Asp203, and Glu204 each coordinate Mg(2+). An N6-carboxylysine modification is found at Lys201. Catalysis depends on His294, which acts as the Proton acceptor. Positions 295, 327, and 379 each coordinate substrate.

This sequence belongs to the RuBisCO large chain family. Type I subfamily. Heterohexadecamer of 8 large chains and 8 small chains; disulfide-linked. The disulfide link is formed within the large subunit homodimers. The cofactor is Mg(2+). Post-translationally, the disulfide bond which can form in the large chain dimeric partners within the hexadecamer appears to be associated with oxidative stress and protein turnover.

It localises to the plastid. It catalyses the reaction 2 (2R)-3-phosphoglycerate + 2 H(+) = D-ribulose 1,5-bisphosphate + CO2 + H2O. The enzyme catalyses D-ribulose 1,5-bisphosphate + O2 = 2-phosphoglycolate + (2R)-3-phosphoglycerate + 2 H(+). Its function is as follows. RuBisCO catalyzes two reactions: the carboxylation of D-ribulose 1,5-bisphosphate, the primary event in carbon dioxide fixation, as well as the oxidative fragmentation of the pentose substrate in the photorespiration process. Both reactions occur simultaneously and in competition at the same active site. This is Ribulose bisphosphate carboxylase large chain from Cuscuta gronovii (Common dodder).